A 362-amino-acid polypeptide reads, in one-letter code: Glutamate 5-kinase (362 aa).

Position 3 (K3) interacts with ATP. Substrate-binding residues include S43, D128, and N140. ATP is bound by residues 160-161 (TD) and 202-208 (TGGMRTK). Residues 267-348 (AGAILVDAGA…RDIENVLGYS (82 aa)) form the PUA domain.

Belongs to the glutamate 5-kinase family.

It is found in the cytoplasm. It catalyses the reaction L-glutamate + ATP = L-glutamyl 5-phosphate + ADP. Its pathway is amino-acid biosynthesis; L-proline biosynthesis; L-glutamate 5-semialdehyde from L-glutamate: step 1/2. Catalyzes the transfer of a phosphate group to glutamate to form L-glutamate 5-phosphate. The chain is Glutamate 5-kinase from Xanthomonas oryzae pv. oryzae (strain MAFF 311018).